Here is a 709-residue protein sequence, read N- to C-terminus: Dual specificity calcium/calmodulin-dependent 3',5'-cyclic nucleotide phosphodiesterase 1C (709 aa).

At methionine 1 the chain carries N-acetylmethionine. The tract at residues 123–146 is calmodulin-binding; sequence EKPRFKSIVHAVQAGIFVERMYRR. Residues 151-528 form the PDEase domain; that stretch reads VGLSYPPAVI…ERWRAKVPKE (378 aa). The active-site Proton donor is histidine 228. The Zn(2+) site is built by histidine 232, histidine 268, aspartate 269, and aspartate 376. A Mg(2+)-binding site is contributed by aspartate 269. 2 disordered regions span residues 453-495 and 523-650; these read LIDE…APIN and AKVP…TCRL. Over residues 483–495 the composition is skewed to polar residues; that stretch reads VKTSGSEGSAPIN. The segment covering 523–556 has biased composition (basic and acidic residues); it reads AKVPKEEKAKKEAEEKARLAAEEQQKEMEAKSQA. Residues 571–581 are compositionally biased toward polar residues; it reads ETKNQVNGTRA. Basic and acidic residues-rich tracts occupy residues 582–598 and 606–633; these read NKSD…EKSS and DFKD…DGTK.

Belongs to the cyclic nucleotide phosphodiesterase family. PDE1 subfamily. In terms of assembly, homodimer. The cofactor is Zn(2+). Requires Mg(2+) as cofactor. As to expression, isoform PDE1C2 is present in the heart and brain and, at lower levels in the lung, liver, kidney and skeletal muscle. Isoform PDE1C1 is expressed in the heart and brain and, at lower levels in lung. Also expressed at low levels in uterus and testis.

The protein resides in the lysosome. The catalysed reaction is a nucleoside 3',5'-cyclic phosphate + H2O = a nucleoside 5'-phosphate + H(+). The enzyme catalyses 3',5'-cyclic GMP + H2O = GMP + H(+). It carries out the reaction 3',5'-cyclic AMP + H2O = AMP + H(+). Type I PDE are activated by the binding of calmodulin in the presence of Ca(2+). In terms of biological role, calmodulin-dependent cyclic nucleotide phosphodiesterase with a dual specificity for the second messengers cAMP and cGMP, which are key regulators of many important physiological processes. Has a high affinity for both cAMP and cGMP. Modulates the amplitude and duration of the cAMP signal in sensory cilia in response to odorant stimulation, hence contributing to the generation of action potentials. Regulates smooth muscle cell proliferation. Regulates the stability of growth factor receptors, including PDGFRB. The sequence is that of Dual specificity calcium/calmodulin-dependent 3',5'-cyclic nucleotide phosphodiesterase 1C from Homo sapiens (Human).